The following is a 526-amino-acid chain: Peptide chain release factor 3 (526 aa).

The region spanning 8–277 (NKRRTFAIIS…GLTEWAPKPQ (270 aa)) is the tr-type G domain. GTP is bound by residues 17-24 (SHPDAGKT), 85-89 (DTPGH), and 139-142 (NKLD).

The protein belongs to the TRAFAC class translation factor GTPase superfamily. Classic translation factor GTPase family. PrfC subfamily.

Its subcellular location is the cytoplasm. Increases the formation of ribosomal termination complexes and stimulates activities of RF-1 and RF-2. It binds guanine nucleotides and has strong preference for UGA stop codons. It may interact directly with the ribosome. The stimulation of RF-1 and RF-2 is significantly reduced by GTP and GDP, but not by GMP. The protein is Peptide chain release factor 3 of Actinobacillus pleuropneumoniae serotype 5b (strain L20).